A 130-amino-acid polypeptide reads, in one-letter code: MAKQIRKTNKKVKMTKLPKGVVHIQSTFNNTIVTITNLKGEVISWSSAGAVGFKGARKSTPFAAKTAAQTAARQSMDQGLKQAKVLVKGAGPGRETAIRGLIDSGLQITLIRDITAIPHNGCRPPKKRRV.

This sequence belongs to the universal ribosomal protein uS11 family. Part of the 30S ribosomal subunit.

It is found in the plastid. It localises to the chloroplast. The chain is Small ribosomal subunit protein uS11c from Tupiella akineta (Green alga).